Consider the following 405-residue polypeptide: Tyrosine--tRNA ligase (405 aa).

The 'HIGH' region motif lies at 48–57 (PTAPDLHLGH). Positions 232–236 (KMSKS) match the 'KMSKS' region motif. An ATP-binding site is contributed by lysine 235. The region spanning 343–404 (IWLPKLLADA…GKRRFVKVIF (62 aa)) is the S4 RNA-binding domain.

The protein belongs to the class-I aminoacyl-tRNA synthetase family. TyrS type 2 subfamily. Homodimer.

It is found in the cytoplasm. It carries out the reaction tRNA(Tyr) + L-tyrosine + ATP = L-tyrosyl-tRNA(Tyr) + AMP + diphosphate + H(+). Catalyzes the attachment of tyrosine to tRNA(Tyr) in a two-step reaction: tyrosine is first activated by ATP to form Tyr-AMP and then transferred to the acceptor end of tRNA(Tyr). This is Tyrosine--tRNA ligase from Desulfotalea psychrophila (strain LSv54 / DSM 12343).